Here is a 602-residue protein sequence, read N- to C-terminus: Sulfite reductase [NADPH] hemoprotein beta-component (602 aa).

The span at 1–15 (MDDHKTASPPRERSY) shows a compositional bias: basic and acidic residues. The tract at residues 1–24 (MDDHKTASPPRERSYETPPAERPI) is disordered. Cysteine 458, cysteine 464, cysteine 503, and cysteine 507 together coordinate [4Fe-4S] cluster. Cysteine 507 serves as a coordination point for siroheme.

The protein belongs to the nitrite and sulfite reductase 4Fe-4S domain family. As to quaternary structure, alpha(8)-beta(8). The alpha component is a flavoprotein, the beta component is a hemoprotein. The cofactor is siroheme. It depends on [4Fe-4S] cluster as a cofactor.

The enzyme catalyses hydrogen sulfide + 3 NADP(+) + 3 H2O = sulfite + 3 NADPH + 4 H(+). It participates in sulfur metabolism; hydrogen sulfide biosynthesis; hydrogen sulfide from sulfite (NADPH route): step 1/1. Functionally, component of the sulfite reductase complex that catalyzes the 6-electron reduction of sulfite to sulfide. This is one of several activities required for the biosynthesis of L-cysteine from sulfate. This chain is Sulfite reductase [NADPH] hemoprotein beta-component, found in Methylobacterium nodulans (strain LMG 21967 / CNCM I-2342 / ORS 2060).